The following is a 247-amino-acid chain: Protein FAM133B (247 aa).

2 disordered regions span residues 19 to 38 (SRGP…NRPR) and 70 to 247 (KKEL…PDSP). Positions 70–80 (KKELEKHREKL) are enriched in basic and acidic residues. Serine 82 carries the post-translational modification Phosphoserine. A compositionally biased stretch (basic residues) spans 89–102 (KKRQRKKKEKKKSG). The span at 103–119 (RYSSSSSSSSDSSSSSS) shows a compositional bias: low complexity. A compositionally biased stretch (basic residues) spans 128–140 (QGKRRKKKKNRSH). Over residues 165 to 176 (KDGTEKEKDIKG) the composition is skewed to basic and acidic residues. 4 positions are modified to phosphoserine: serine 191, serine 192, serine 194, and serine 196. A compositionally biased stretch (basic and acidic residues) spans 211 to 221 (SSEEREKATEK). Residues 222-239 (TKKKKKHKKHSKKKKKKA) are compositionally biased toward basic residues.

Belongs to the FAM133 family.

This is Protein FAM133B (FAM133B) from Homo sapiens (Human).